The following is a 350-amino-acid chain: GTPase Obg (350 aa).

Residues 1–175 (MFVDNIRIFA…GVFFMELRRI (175 aa)) form the Obg domain. The OBG-type G domain occupies 176–345 (ADAGLVGYPN…LRNRLDELVG (170 aa)). GTP is bound by residues 182-189 (GYPNAGKS), 207-211 (FTTLQ), 229-232 (DIPG), 299-302 (NKMD), and 326-328 (SAL). 2 residues coordinate Mg(2+): Ser189 and Thr209.

The protein belongs to the TRAFAC class OBG-HflX-like GTPase superfamily. OBG GTPase family. In terms of assembly, monomer. The cofactor is Mg(2+).

Its subcellular location is the cytoplasm. In terms of biological role, an essential GTPase which binds GTP, GDP and possibly (p)ppGpp with moderate affinity, with high nucleotide exchange rates and a fairly low GTP hydrolysis rate. Plays a role in control of the cell cycle, stress response, ribosome biogenesis and in those bacteria that undergo differentiation, in morphogenesis control. This Akkermansia muciniphila (strain ATCC BAA-835 / DSM 22959 / JCM 33894 / BCRC 81048 / CCUG 64013 / CIP 107961 / Muc) protein is GTPase Obg.